A 35-amino-acid chain; its full sequence is Potassium channel toxin alpha-KTx 6.12 (35 aa).

At Gln-1 the chain carries Pyrrolidone carboxylic acid. Disulfide bonds link Cys-4-Cys-24, Cys-10-Cys-29, Cys-14-Cys-31, and Cys-19-Cys-34. A Lysine amide modification is found at Lys-35.

This sequence belongs to the short scorpion toxin superfamily. Potassium channel inhibitor family. Alpha-KTx 06 subfamily. Monomer. As to expression, expressed by the venom gland.

It is found in the secreted. Functionally, high affinity blocker of Kv1.3/KCNA3 channels of human T cells. Blocks Kv1.2/KCNA2 with an order of magnitude smaller than for Kv1.3/KCNA3. The protein is Potassium channel toxin alpha-KTx 6.12 of Anuroctonus phaiodactylus (Mafia scorpion).